The chain runs to 341 residues: Ubiquinone biosynthesis protein COQ4, mitochondrial (341 aa).

A mitochondrion-targeting transit peptide spans 1-16 (MLSRISSVRIGTQVRQ). 4 residues coordinate Zn(2+): H220, D221, H224, and E236.

The protein belongs to the COQ4 family. In terms of assembly, component of a multi-subunit COQ enzyme complex, composed of at least COQ3, COQ4, COQ5, COQ6, COQ7 and COQ9. Zn(2+) serves as cofactor.

The protein localises to the mitochondrion inner membrane. It carries out the reaction a 4-hydroxy-3-methoxy-5-(all-trans-polyprenyl)benzoate + H(+) = a 2-methoxy-6-(all-trans-polyprenyl)phenol + CO2. Its pathway is cofactor biosynthesis; ubiquinone biosynthesis. In terms of biological role, lyase that catalyzes the C1-decarboxylation of 4-hydroxy-3-methoxy-5-(all-trans-polyprenyl)benzoic acid into 2-methoxy-6-(all-trans-polyprenyl)phenol during ubiquinone biosynthesis. The chain is Ubiquinone biosynthesis protein COQ4, mitochondrial from Vanderwaltozyma polyspora (strain ATCC 22028 / DSM 70294 / BCRC 21397 / CBS 2163 / NBRC 10782 / NRRL Y-8283 / UCD 57-17) (Kluyveromyces polysporus).